The following is a 438-amino-acid chain: ATP synthase subunit alpha, chloroplastic (438 aa).

170-177 (GDRQTGKT) contributes to the ATP binding site.

The protein belongs to the ATPase alpha/beta chains family. As to quaternary structure, F-type ATPases have 2 components, CF(1) - the catalytic core - and CF(0) - the membrane proton channel. CF(1) has five subunits: alpha(3), beta(3), gamma(1), delta(1), epsilon(1). CF(0) has four main subunits: a, b, b' and c.

Its subcellular location is the plastid. It is found in the chloroplast thylakoid membrane. The catalysed reaction is ATP + H2O + 4 H(+)(in) = ADP + phosphate + 5 H(+)(out). Its function is as follows. Produces ATP from ADP in the presence of a proton gradient across the membrane. The alpha chain is a regulatory subunit. This chain is ATP synthase subunit alpha, chloroplastic, found in Ochrosphaera neapolitana.